A 184-amino-acid chain; its full sequence is Effector CFEM1 (184 aa).

The N-terminal stretch at Met-1–Ala-17 is a signal peptide. Residues Gln-18–Thr-112 enclose the CFEM domain. Disulfide bonds link Cys-26-Cys-68, Cys-30-Cys-63, Cys-41-Cys-48, and Cys-50-Cys-85. Position 45 (Asp-45) interacts with heme. Disordered stretches follow at residues Asn-83–Thr-106 and Ile-136–Asn-163. The segment covering Pro-88–Pro-103 has biased composition (basic and acidic residues). Asn-163 is lipidated: GPI-anchor amidated asparagine. The propeptide at Gly-164–Leu-184 is removed in mature form.

This sequence belongs to the RBT5 family. As to quaternary structure, interacts with Z.mays LRR5; the interaction is direct. Interacts (via CFEM domain) with Z.mays WAK17 isoform 2; the interaction is direct.

The protein resides in the secreted. The protein localises to the cell wall. It is found in the cell membrane. Its subcellular location is the cell septum. It localises to the cytoplasm. Suppresses host programmed cell death during infection by binding to Z.mays WAK17 isoform 2 and Z.mays LRR5, to prevent activation of Z.mays WAK17 isoform 1 and the downstream hypersensitive response. The protein is Effector CFEM1 of Gibberella zeae (strain ATCC MYA-4620 / CBS 123657 / FGSC 9075 / NRRL 31084 / PH-1) (Wheat head blight fungus).